We begin with the raw amino-acid sequence, 241 residues long: Small ribosomal subunit protein uS3 (241 aa).

The KH type-2 domain maps to 39 to 107; it reads MRKFVMDELK…ETHLNIVEVR (69 aa). The segment at 214–241 is disordered; sequence ASERRALEGDAQGPASRDRDRDRRRDNA. Positions 229–241 are enriched in basic and acidic residues; that stretch reads SRDRDRDRRRDNA.

It belongs to the universal ribosomal protein uS3 family. As to quaternary structure, part of the 30S ribosomal subunit. Forms a tight complex with proteins S10 and S14.

Its function is as follows. Binds the lower part of the 30S subunit head. Binds mRNA in the 70S ribosome, positioning it for translation. The sequence is that of Small ribosomal subunit protein uS3 from Rhizobium rhizogenes (strain K84 / ATCC BAA-868) (Agrobacterium radiobacter).